The following is a 429-amino-acid chain: Ribosomal RNA small subunit methyltransferase B (429 aa).

S-adenosyl-L-methionine is bound by residues 254–260 (CAAPGGK), D277, D303, and D322. C375 (nucleophile) is an active-site residue.

Belongs to the class I-like SAM-binding methyltransferase superfamily. RsmB/NOP family.

Its subcellular location is the cytoplasm. It catalyses the reaction cytidine(967) in 16S rRNA + S-adenosyl-L-methionine = 5-methylcytidine(967) in 16S rRNA + S-adenosyl-L-homocysteine + H(+). Specifically methylates the cytosine at position 967 (m5C967) of 16S rRNA. In Escherichia coli (strain UTI89 / UPEC), this protein is Ribosomal RNA small subunit methyltransferase B.